The primary structure comprises 277 residues: Undecaprenyl-diphosphatase (277 aa).

7 helical membrane passes run 3–23, 44–64, 82–102, 109–129, 189–209, 218–238, and 253–273; these read IALL…EFLP, AKVF…LVYW, QFAL…LLFG, LFTP…ILWA, TDFS…YSLF, ADAP…WLCI, and FAWY…SGVV.

This sequence belongs to the UppP family.

The protein localises to the cell inner membrane. The catalysed reaction is di-trans,octa-cis-undecaprenyl diphosphate + H2O = di-trans,octa-cis-undecaprenyl phosphate + phosphate + H(+). In terms of biological role, catalyzes the dephosphorylation of undecaprenyl diphosphate (UPP). Confers resistance to bacitracin. In Polaromonas naphthalenivorans (strain CJ2), this protein is Undecaprenyl-diphosphatase.